Here is a 269-residue protein sequence, read N- to C-terminus: MLEEINYDTKLFGLIGKNIKYTLSPYIHNFSFRTLGINAVYLVFDLDEMKFKRSISGILEIAEGLNVTIPYKDEVMKYLDNTDTHSTRIQAVNTIYKKSGYNTDYLAIKNLVRKKIKNVSGYECYIYGAGGAAKAAAFALSELGCSSISIVNRTKSRAYELAELLNKNGYNASIKENCNITNNILIVNSTPNSSVVPEDCVKKSDLVIEFVYRPVETELIKNAKKYGIQYINGLEILVNQAVEAEKIWFNKSVADEKIIEYLYARELVW.

Residues 22-24 and Thr68 each bind shikimate; that span reads TLS. Lys72 functions as the Proton acceptor in the catalytic mechanism. Positions 93 and 104 each coordinate shikimate. NADP(+)-binding positions include 128–132, 152–157, and Phe210; these read GAGGA and NRTKSR. Residue Tyr212 participates in shikimate binding. Gly233 is a binding site for NADP(+).

This sequence belongs to the shikimate dehydrogenase family. Homodimer.

It carries out the reaction shikimate + NADP(+) = 3-dehydroshikimate + NADPH + H(+). It participates in metabolic intermediate biosynthesis; chorismate biosynthesis; chorismate from D-erythrose 4-phosphate and phosphoenolpyruvate: step 4/7. In terms of biological role, involved in the biosynthesis of the chorismate, which leads to the biosynthesis of aromatic amino acids. Catalyzes the reversible NADPH linked reduction of 3-dehydroshikimate (DHSA) to yield shikimate (SA). In Saccharolobus solfataricus (strain ATCC 35092 / DSM 1617 / JCM 11322 / P2) (Sulfolobus solfataricus), this protein is Shikimate dehydrogenase (NADP(+)).